The primary structure comprises 564 residues: Serine/threonine-protein kinase DBF20 (564 aa).

Ser17 carries the phosphoserine modification. The tract at residues 24–62 is disordered; sequence LNIPKPTSPQAQYRPARKSENGRLTPGLPRSYKPCDSDD. One can recognise a Protein kinase domain in the interval 169-469; that stretch reads FQILTQVGQG…FEQVRKMSYF (301 aa). Residues 175 to 183 and Lys198 contribute to the ATP site; that span reads VGQGGYGQV. Catalysis depends on Asp292, which acts as the Proton acceptor. The residue at position 366 (Ser366) is a Phosphoserine. The AGC-kinase C-terminal domain occupies 470-547; that stretch reads AEINFETLRT…RHRDGKQGSS (78 aa). Position 536 is a phosphothreonine (Thr536).

Belongs to the protein kinase superfamily. Ser/Thr protein kinase family.

It catalyses the reaction L-seryl-[protein] + ATP = O-phospho-L-seryl-[protein] + ADP + H(+). The enzyme catalyses L-threonyl-[protein] + ATP = O-phospho-L-threonyl-[protein] + ADP + H(+). Its function is as follows. Is probably a Ser/Thr-protein kinase that may function in initiation of DNA synthesis and also in late nuclear division. The protein is Serine/threonine-protein kinase DBF20 (DBF20) of Saccharomyces cerevisiae (strain ATCC 204508 / S288c) (Baker's yeast).